A 461-amino-acid chain; its full sequence is GTPase Era, mitochondrial (461 aa).

Residues 1 to 35 (MAAPWLQRWRGAYAGPSGPLRLVRLHGVQRSSWRA) constitute a mitochondrion transit peptide. Residues 39–73 (AAGAFGAGPHPGPPQRAANPGPGPHPPPVATSREK) form a disordered region. The 266-residue stretch at 89–354 (KVLRISIIGA…QYLLMQAKPG (266 aa)) folds into the Era-type G domain. Residues 97 to 104 (GAPNSGKS) form a G1 region. 97–104 (GAPNSGKS) contributes to the GTP binding site. The segment at 123 to 127 (HTTRC) is G2. Residues 144-147 (DTPG) are G3. GTP is bound by residues 144–148 (DTPGL) and 213–216 (NKVD). The segment at 213-216 (NKVD) is G4. A disordered region spans residues 260–319 (KVTQTPPPENRARESPCQLETDKAQEGSSLDNSSDVKASESSLDTEAREQKPYKYGDQKN). A compositionally biased stretch (basic and acidic residues) spans 269 to 284 (NRARESPCQLETDKAQ). The span at 285 to 303 (EGSSLDNSSDVKASESSLD) shows a compositional bias: polar residues. A compositionally biased stretch (basic and acidic residues) spans 304 to 319 (TEAREQKPYKYGDQKN). A G5 region spans residues 332-334 (LAA). A KH type-2 domain is found at 380 to 461 (ILEYLPLEVP…RLKLKVEVKS (82 aa)).

Belongs to the TRAFAC class TrmE-Era-EngA-EngB-Septin-like GTPase superfamily. Era GTPase family.

It is found in the mitochondrion matrix. It localises to the mitochondrion inner membrane. Its function is as follows. Probable GTPase that plays a role in the mitochondrial ribosomal small subunit assembly. Specifically binds the 12S mitochondrial rRNA (12S mt-rRNA) to a 33 nucleotide section delineating the 3' terminal stem-loop region. May act as a chaperone that protects the 12S mt-rRNA on the 28S mitoribosomal subunit during ribosomal small subunit assembly. The protein is GTPase Era, mitochondrial (ERAL1) of Gallus gallus (Chicken).